A 120-amino-acid chain; its full sequence is uncharacterized protein (120 aa).

The signal sequence occupies residues 1-22 (MSTSGMLFIFATFCPCFLSCCA). Residues 23–59 (FMSHWKLKDFSFRFLRMCGERSLVVCYPLKLLKQIRS) are Extracellular-facing. A helical transmembrane segment spans residues 60 to 80 (LFSIAIGHLSLMLIEGSANLL). Residues 81–120 (SLEEISRTLLRILDFVGNKNMRTYLEVPLCRWHISQARPN) are Cytoplasmic-facing.

The protein resides in the membrane. This is an uncharacterized protein from Schizosaccharomyces pombe (strain 972 / ATCC 24843) (Fission yeast).